Here is a 359-residue protein sequence, read N- to C-terminus: 3-dehydroquinate synthase (359 aa).

NAD(+) is bound by residues 71–76, 105–109, 129–130, Lys-142, Lys-151, and 169–172; these read DGEAYK, GVIGD, TT, and TLGT. Zn(2+) contacts are provided by Glu-184, His-247, and His-264.

The protein belongs to the sugar phosphate cyclases superfamily. Dehydroquinate synthase family. Co(2+) is required as a cofactor. It depends on Zn(2+) as a cofactor. NAD(+) serves as cofactor.

It is found in the cytoplasm. The catalysed reaction is 7-phospho-2-dehydro-3-deoxy-D-arabino-heptonate = 3-dehydroquinate + phosphate. It functions in the pathway metabolic intermediate biosynthesis; chorismate biosynthesis; chorismate from D-erythrose 4-phosphate and phosphoenolpyruvate: step 2/7. Functionally, catalyzes the conversion of 3-deoxy-D-arabino-heptulosonate 7-phosphate (DAHP) to dehydroquinate (DHQ). This chain is 3-dehydroquinate synthase, found in Thiobacillus denitrificans (strain ATCC 25259 / T1).